Reading from the N-terminus, the 340-residue chain is Protein SSUH2 homolog (340 aa).

The segment covering 1-11 has biased composition (acidic residues); sequence MDRDPSEEDSM. A disordered region spans residues 1-20; it reads MDRDPSEEDSMADLSFEAES.

In terms of tissue distribution, widely expressed, with highest levels in the liver, intestine, tongue and underjaw.

It is found in the cytoplasm. The protein resides in the nucleus. In terms of biological role, plays a role in odontogenesis. The sequence is that of Protein SSUH2 homolog from Mus musculus (Mouse).